The sequence spans 96 residues: Large ribosomal subunit protein bL28 (96 aa).

The segment at 1–23 (MSRVCELSGKAPMTGNTVSHANN) is disordered.

The protein belongs to the bacterial ribosomal protein bL28 family.

The protein is Large ribosomal subunit protein bL28 of Cereibacter sphaeroides (strain ATCC 17025 / ATH 2.4.3) (Rhodobacter sphaeroides).